The following is a 167-amino-acid chain: MDITIQHPWFKRALGPFYPNRLFDQVFGEGMFDYDLFPFLSSTISPYYRQSFFRGFLDSGISEVRSDRDRVKHFSPEDLTVKILDDFVEIHGKHSERQDDHGYISREFHRRYRLPSNLNESSISCSLSADGILTFSGPKLMSSLDSSHGERPIPVSREEKPTSAPSS.

N-acetylmethionine is present on M1. The region spanning 47–158 is the sHSP domain; the sequence is YYRQSFFRGF…GERPIPVSRE (112 aa). 4 residues coordinate Zn(2+): H94, E96, H101, and H148. Residues 143 to 167 form a disordered region; that stretch reads SLDSSHGERPIPVSREEKPTSAPSS. Residues 147–161 show a composition bias toward basic and acidic residues; sequence SHGERPIPVSREEKP. S156 carries O-linked (GlcNAc) serine glycosylation.

Belongs to the small heat shock protein (HSP20) family. As to quaternary structure, heteropolymer composed of three CRYAA and one CRYAB subunits. Inter-subunit bridging via zinc ions enhances stability, which is crucial as there is no protein turn over in the lens. Can also form homodimers and homotetramers (dimers of dimers) which serve as the building blocks of homooligomers. Within homooligomers, the zinc-binding motif is created from residues of 3 different molecules. His-94 and Glu-96 from one molecule are ligands of the zinc ion, and His-101 and His-148 residues from additional molecules complete the site with tetrahedral coordination geometry.

It is found in the cytoplasm. The protein localises to the nucleus. Contributes to the transparency and refractive index of the lens. May act as a chaperone, preventing aggregation of various proteins under a wide range of stress conditions. The protein is Alpha-crystallin A chain (CRYAA) of Pelophylax lessonae (Pool frog).